Here is a 168-residue protein sequence, read N- to C-terminus: Oleosin 18.2 kDa (168 aa).

Position 2 is an N-acetylalanine (Ala2). A polar region spans residues 2–45; that stretch reads AEVRDRNLPHQVQVHPQYRLDNTTGGGYGAKNYHSGPSTSQVLA. The next 3 membrane-spanning stretches (helical) occupy residues 43-63, 76-96, and 97-117; these read VLAV…AGLT, PLFI…AMAV, and TGFL…SYVL. Residues 46–117 form a hydrophobic region; sequence VLTLLPIGGT…TGLSSLSYVL (72 aa).

Belongs to the oleosin family.

Its subcellular location is the lipid droplet. The protein resides in the membrane. Its function is as follows. May have a structural role to stabilize the lipid body during desiccation of the seed by preventing coalescence of the oil. Probably interacts with both lipid and phospholipid moieties of lipid bodies. May also provide recognition signals for specific lipase anchorage in lipolysis during seedling growth. The sequence is that of Oleosin 18.2 kDa (MATP6-A) from Gossypium hirsutum (Upland cotton).